We begin with the raw amino-acid sequence, 291 residues long: Ribosomal RNA small subunit methyltransferase A (291 aa).

Residues His21, Leu23, Gly48, Glu70, Asp95, and Asn115 each coordinate S-adenosyl-L-methionine.

Belongs to the class I-like SAM-binding methyltransferase superfamily. rRNA adenine N(6)-methyltransferase family. RsmA subfamily.

It is found in the cytoplasm. It catalyses the reaction adenosine(1518)/adenosine(1519) in 16S rRNA + 4 S-adenosyl-L-methionine = N(6)-dimethyladenosine(1518)/N(6)-dimethyladenosine(1519) in 16S rRNA + 4 S-adenosyl-L-homocysteine + 4 H(+). Functionally, specifically dimethylates two adjacent adenosines (A1518 and A1519) in the loop of a conserved hairpin near the 3'-end of 16S rRNA in the 30S particle. May play a critical role in biogenesis of 30S subunits. The polypeptide is Ribosomal RNA small subunit methyltransferase A (Prochlorococcus marinus (strain NATL1A)).